A 193-amino-acid chain; its full sequence is Putative manganese efflux pump MntP (193 aa).

The next 6 membrane-spanning stretches (helical) occupy residues 6-26 (LLGLAVALAMDAFAVAIAVGI), 41-61 (YHFGLFQALMPIIGWALGTGI), 65-85 (TQSYAHWIAFTLLALVGANMI), 107-127 (LIILSLATSIDALAVGLSLSM), 132-152 (IWYPALIIGLVAGAFTLFGML), and 169-189 (VLGGIILWAIGLNILYDNGVF).

The protein belongs to the MntP (TC 9.B.29) family.

The protein resides in the cell inner membrane. Functionally, probably functions as a manganese efflux pump. The protein is Putative manganese efflux pump MntP of Desulfotalea psychrophila (strain LSv54 / DSM 12343).